Consider the following 366-residue polypeptide: Protein-glutamate methylesterase/protein-glutamine glutaminase of group 2 operon (366 aa).

One can recognise a Response regulatory domain in the interval 19–136 (RVLIVDDSAM…GQGLPAIMRD (118 aa)). Asp-70 is subject to 4-aspartylphosphate. Positions 162–356 (PGASEDWIHA…ARMMLAAAAD (195 aa)) constitute a CheB-type methylesterase domain. Residues Ser-175, His-201, and Asp-298 contribute to the active site.

Belongs to the CheB family. In terms of processing, phosphorylated by CheA. Phosphorylation of the N-terminal regulatory domain activates the methylesterase activity.

It localises to the cytoplasm. The enzyme catalyses [protein]-L-glutamate 5-O-methyl ester + H2O = L-glutamyl-[protein] + methanol + H(+). It carries out the reaction L-glutaminyl-[protein] + H2O = L-glutamyl-[protein] + NH4(+). Its function is as follows. Involved in chemotaxis. Part of a chemotaxis signal transduction system that modulates chemotaxis in response to various stimuli. Catalyzes the demethylation of specific methylglutamate residues introduced into the chemoreceptors (methyl-accepting chemotaxis proteins or MCP) by CheR. Also mediates the irreversible deamidation of specific glutamine residues to glutamic acid. This Cereibacter sphaeroides (Rhodobacter sphaeroides) protein is Protein-glutamate methylesterase/protein-glutamine glutaminase of group 2 operon.